Reading from the N-terminus, the 227-residue chain is Enolase-phosphatase E1 (227 aa).

Aspartate 11 and glutamate 13 together coordinate Mg(2+). Substrate-binding positions include 118–119 and lysine 161; that span reads SS. Aspartate 186 is a Mg(2+) binding site.

Belongs to the HAD-like hydrolase superfamily. MasA/MtnC family. As to quaternary structure, monomer. It depends on Mg(2+) as a cofactor.

It localises to the cytoplasm. It is found in the nucleus. It catalyses the reaction 5-methylsulfanyl-2,3-dioxopentyl phosphate + H2O = 1,2-dihydroxy-5-(methylsulfanyl)pent-1-en-3-one + phosphate. Its pathway is amino-acid biosynthesis; L-methionine biosynthesis via salvage pathway; L-methionine from S-methyl-5-thio-alpha-D-ribose 1-phosphate: step 3/6. It functions in the pathway amino-acid biosynthesis; L-methionine biosynthesis via salvage pathway; L-methionine from S-methyl-5-thio-alpha-D-ribose 1-phosphate: step 4/6. Bifunctional enzyme that catalyzes the enolization of 2,3-diketo-5-methylthiopentyl-1-phosphate (DK-MTP-1-P) into the intermediate 2-hydroxy-3-keto-5-methylthiopentenyl-1-phosphate (HK-MTPenyl-1-P), which is then dephosphorylated to form the acireductone 1,2-dihydroxy-3-keto-5-methylthiopentene (DHK-MTPene). This is Enolase-phosphatase E1 from Saccharomyces cerevisiae (strain YJM789) (Baker's yeast).